We begin with the raw amino-acid sequence, 363 residues long: GTPase Obg (363 aa).

Residues 1-159 form the Obg domain; the sequence is MKFIDEAKIY…LELRLELRVL (159 aa). Positions 160–338 constitute an OBG-type G domain; the sequence is ADVGLLGLPN…LIYAISEALE (179 aa). GTP is bound by residues 166–173, 191–195, 213–216, 284–287, and 319–321; these read GLPNAGKS, FTTLH, DVPG, NKLD, and AAI. Positions 173 and 193 each coordinate Mg(2+). Residues 342–363 form a disordered region; sequence RPEIGDLDDNDEDSDEIIRDTE. The span at 346–356 shows a compositional bias: acidic residues; sequence GDLDDNDEDSD.

The protein belongs to the TRAFAC class OBG-HflX-like GTPase superfamily. OBG GTPase family. Monomer. It depends on Mg(2+) as a cofactor.

It is found in the cytoplasm. An essential GTPase which binds GTP, GDP and possibly (p)ppGpp with moderate affinity, with high nucleotide exchange rates and a fairly low GTP hydrolysis rate. Plays a role in control of the cell cycle, stress response, ribosome biogenesis and in those bacteria that undergo differentiation, in morphogenesis control. The sequence is that of GTPase Obg from Dechloromonas aromatica (strain RCB).